The following is a 152-amino-acid chain: Nucleoside diphosphate kinase B (152 aa).

The interval 1-66 (MAHQERTFIA…DRPFYPGLVK (66 aa)) is interaction with AKAP13. ATP contacts are provided by K12, F60, R88, T94, R105, and N115. H118 (pros-phosphohistidine intermediate) is an active-site residue.

The protein belongs to the NDK family. As to quaternary structure, hexamer of two different chains: An and B (A6, A5B, A4B2, A3B3, A2B4, AB5, B6). Interacts with CAPN8. Interacts with AKAP13. Interacts with ITGB1BP1 (via C-terminal domain region). Interacts with BCL2L10. It depends on Mg(2+) as a cofactor. In terms of tissue distribution, ubiquitous.

Its subcellular location is the cytoplasm. It localises to the cell projection. The protein resides in the lamellipodium. It is found in the ruffle. The protein localises to the nucleus. It catalyses the reaction a 2'-deoxyribonucleoside 5'-diphosphate + ATP = a 2'-deoxyribonucleoside 5'-triphosphate + ADP. It carries out the reaction a ribonucleoside 5'-diphosphate + ATP = a ribonucleoside 5'-triphosphate + ADP. The catalysed reaction is ATP + protein L-histidine = ADP + protein N-phospho-L-histidine.. Major role in the synthesis of nucleoside triphosphates other than ATP. The ATP gamma phosphate is transferred to the NDP beta phosphate via a ping-pong mechanism, using a phosphorylated active-site intermediate. Negatively regulates Rho activity by interacting with AKAP13/LBC. Acts as a transcriptional activator of the MYC gene; binds DNA non-specifically. Binds to both single-stranded guanine- and cytosine-rich strands within the nuclease hypersensitive element (NHE) III(1) region of the MYC gene promoter. Does not bind to duplex NHE III(1). Has G-quadruplex (G4) DNA-binding activity, which is independent of its nucleotide-binding and kinase activity. Binds both folded and unfolded G4 with similar low nanomolar affinities. Stabilizes folded G4s regardless of whether they are prefolded or not. Exhibits histidine protein kinase activity. This Canis lupus familiaris (Dog) protein is Nucleoside diphosphate kinase B (NME2).